We begin with the raw amino-acid sequence, 503 residues long: Glycerol kinase (503 aa).

Residue Thr14 participates in ADP binding. Residues Thr14, Thr15, and Ser16 each coordinate ATP. Position 14 (Thr14) interacts with sn-glycerol 3-phosphate. Arg18 lines the ADP pocket. Sn-glycerol 3-phosphate is bound by residues Arg84, Glu85, Tyr136, and Asp246. 5 residues coordinate glycerol: Arg84, Glu85, Tyr136, Asp246, and Gln247. Positions 268 and 311 each coordinate ADP. Positions 268, 311, 315, and 412 each coordinate ATP. Residues Gly412 and Asn416 each coordinate ADP. Residues 468–481 (ERTFSPDSDNEKRE) show a composition bias toward basic and acidic residues. Residues 468–489 (ERTFSPDSDNEKRERRYKGWKK) are disordered.

Belongs to the FGGY kinase family.

It catalyses the reaction glycerol + ATP = sn-glycerol 3-phosphate + ADP + H(+). Its pathway is polyol metabolism; glycerol degradation via glycerol kinase pathway; sn-glycerol 3-phosphate from glycerol: step 1/1. Its activity is regulated as follows. Inhibited by fructose 1,6-bisphosphate (FBP). Key enzyme in the regulation of glycerol uptake and metabolism. Catalyzes the phosphorylation of glycerol to yield sn-glycerol 3-phosphate. This Haemophilus influenzae (strain ATCC 51907 / DSM 11121 / KW20 / Rd) protein is Glycerol kinase.